The chain runs to 253 residues: tRNA1(Val) (adenine(37)-N6)-methyltransferase (253 aa).

It belongs to the methyltransferase superfamily. tRNA (adenine-N(6)-)-methyltransferase family.

Its subcellular location is the cytoplasm. The enzyme catalyses adenosine(37) in tRNA1(Val) + S-adenosyl-L-methionine = N(6)-methyladenosine(37) in tRNA1(Val) + S-adenosyl-L-homocysteine + H(+). In terms of biological role, specifically methylates the adenine in position 37 of tRNA(1)(Val) (anticodon cmo5UAC). The chain is tRNA1(Val) (adenine(37)-N6)-methyltransferase from Dickeya chrysanthemi (strain Ech1591) (Dickeya zeae (strain Ech1591)).